A 590-amino-acid polypeptide reads, in one-letter code: Probable serine/threonine-protein phosphatase PP2A regulatory subunit (590 aa).

14 HEAT repeats span residues 37-73 (LSTI…VLAE), 74-111 (QLGN…DKAV), 113-150 (SLRK…TSAC), 151-188 (GLFS…RAAA), 189-227 (AKLG…LLTV), 228-266 (ESAI…YMVA), 267-305 (EKLI…CAAT), 306-344 (QRLQ…QLVK), 349-387 (GVIM…LNII), 388-426 (SSLD…LAIV), 427-465 (QFMP…EAST), 466-504 (LIMK…MTCL), 505-543 (FCLN…FNAA), and 544-582 (KSLK…YFSE).

Belongs to the phosphatase 2A regulatory subunit A family. As to quaternary structure, part of a complex consisting of a common heterodimeric core enzyme, composed of catalytic subunit let-92 and constant regulatory subunit paa-1, that associates with a variety of regulatory subunits which confer distinct properties to the holoenzyme. Interacts with rsa-1.

Its subcellular location is the cytoplasm. The protein resides in the cytoskeleton. It localises to the microtubule organizing center. The protein localises to the centrosome. It is found in the spindle. Functionally, acts as a scaffolding protein for phosphatase let-92 and its regulatory subunits. Probably together with let-92 and regulatory subunit sur-6, regulates centriole duplication, microtubule outgrowth and mitotic spindle stability during early embryonic cell division by preventing the degradation of sas-5 and kinase zyg-1. During vulva development, may play a role with phosphatase let-92 and regulatory subunit sur-6 in the induction of vulva cell precursors by positively regulating let-60/Ras-MAP kinase signaling, probably by promoting lin-45 activation. Plays a positive role in axon guidance probably by inhibiting phosphatase let-92. In Caenorhabditis elegans, this protein is Probable serine/threonine-protein phosphatase PP2A regulatory subunit (paa-1).